The primary structure comprises 181 residues: LECEICTAPGLECNSWTKTCDANQDTCVTFQTEVIKAPVSFTFISKSCGTSDTCALNYVQTSPHNKLTHKSQRTCCTGEECKTLPPPVLEHKVNQPDGLQCPGCFGLSTKDCTEHLVSCRGPENQCLSITGKEFGFIFRALSYKGCATESLCSLFEKRFWNVLEDVEVDFKCTPALPKSSQ.

8 disulfides stabilise this stretch: Cys-3/Cys-27, Cys-6/Cys-13, Cys-20/Cys-48, Cys-54/Cys-75, Cys-76/Cys-81, Cys-101/Cys-126, Cys-119/Cys-146, and Cys-152/Cys-172.

This sequence belongs to the CNF-like-inhibitor family. As to quaternary structure, heterotrimer of 2 subunits A and 1 subunit B. As to expression, expressed by the liver.

It localises to the secreted. Functionally, strongly inhibits its own venom PLA2 and all other PLA2s tested including Elapid, Crotalid and Viperid venom PLA2s, as well as honeybee PLA2s. In Laticauda semifasciata (Black-banded sea krait), this protein is Phospholipase A2 inhibitor gamma subunit B.